Here is a 286-residue protein sequence, read N- to C-terminus: Energy-coupling factor transporter ATP-binding protein EcfA2 (286 aa).

The ABC transporter domain occupies 3–246 (IQFNQVSYIY…KTQLLKWHIE (244 aa)). ATP is bound at residue 40 to 47 (GQTGSGKS).

This sequence belongs to the ABC transporter superfamily. Energy-coupling factor EcfA family. Forms a stable energy-coupling factor (ECF) transporter complex composed of 2 membrane-embedded substrate-binding proteins (S component), 2 ATP-binding proteins (A component) and 2 transmembrane proteins (T component).

It is found in the cell membrane. In terms of biological role, ATP-binding (A) component of a common energy-coupling factor (ECF) ABC-transporter complex. Unlike classic ABC transporters this ECF transporter provides the energy necessary to transport a number of different substrates. This chain is Energy-coupling factor transporter ATP-binding protein EcfA2, found in Staphylococcus epidermidis (strain ATCC 12228 / FDA PCI 1200).